Reading from the N-terminus, the 327-residue chain is Tetraacyldisaccharide 4'-kinase (327 aa).

Residue 58–65 coordinates ATP; that stretch reads TVGGTGKT.

This sequence belongs to the LpxK family.

It carries out the reaction a lipid A disaccharide + ATP = a lipid IVA + ADP + H(+). The protein operates within glycolipid biosynthesis; lipid IV(A) biosynthesis; lipid IV(A) from (3R)-3-hydroxytetradecanoyl-[acyl-carrier-protein] and UDP-N-acetyl-alpha-D-glucosamine: step 6/6. Its function is as follows. Transfers the gamma-phosphate of ATP to the 4'-position of a tetraacyldisaccharide 1-phosphate intermediate (termed DS-1-P) to form tetraacyldisaccharide 1,4'-bis-phosphate (lipid IVA). The chain is Tetraacyldisaccharide 4'-kinase from Alcanivorax borkumensis (strain ATCC 700651 / DSM 11573 / NCIMB 13689 / SK2).